The following is a 1093-amino-acid chain: Electroneutral sodium bicarbonate exchanger 1 (1093 aa).

Disordered regions lie at residues 1-25 (MPAA…AVVD) and 55-95 (PLGR…HDTP). The Extracellular portion of the chain corresponds to 1-478 (MPAAGSNEPD…DYRDALSLQC (478 aa)). Residues 59–77 (QSHRHHRTHGQKHRRRGRG) show a composition bias toward basic residues. Phe167 and Leu169 together coordinate Zn(2+). The VTVLP; mediates dimerization signature appears at 340-344 (LFILL). The chain crosses the membrane as a helical span at residues 479 to 499 (LASFLFLYCACMSPVITFGGL). Residues 500-523 (LGEATEGRISAIESLFGASMTGIA) lie on the Cytoplasmic side of the membrane. A helical transmembrane segment spans residues 524 to 544 (YSLFAGQALTILGSTGPVLVF). At 545–565 (EKILFKFCKDYALSYLSLRAC) the chain is on the extracellular side. Residues 566-586 (IGLWTAFLCIVLVATDASSLV) form a helical membrane-spanning segment. Residues 587-595 (CYITRFTEE) lie on the Cytoplasmic side of the membrane. The helical transmembrane segment at 596–616 (AFASLICIIFIYEAIEKLIHL) threads the bilayer. The Extracellular segment spans residues 617-687 (AETYPIHMHS…EFMGSACGHH (71 aa)). 2 disulfides stabilise this stretch: Cys636–Cys684 and Cys638–Cys672. Asn646 carries N-linked (GlcNAc) asparagine glycosylation. A helical membrane pass occupies residues 688–708 (GPYTPDVLFWSCILFFTTFIL). The Cytoplasmic portion of the chain corresponds to 709–731 (SSTLKTFKTSRYFPTRVRSMVSD). The helical transmembrane segment at 732–752 (FAVFLTIFTMVIIDFLIGVPS) threads the bilayer. The Extracellular portion of the chain corresponds to 753–778 (PKLQVPSVFKPTRDDRGWIINPIGPN). The chain crosses the membrane as a helical span at residues 779–799 (PWWTVIAAIIPALLCTILIFM). The Cytoplasmic portion of the chain corresponds to 800 to 824 (DQQITAVIINRKEHKLKKGCGYHLD). A helical transmembrane segment spans residues 825 to 845 (LLMVAIMLGVCSIMGLPWFVA). Over 846-881 (ATVLSITHVNSLKLESECSAPGEQPKFLGIREQRVT) the chain is Extracellular. The chain crosses the membrane as a helical span at residues 882–902 (GLMIFVLMGCSVFMTAILKFI). Residues 903–904 (PM) lie on the Cytoplasmic side of the membrane. A helical transmembrane segment spans residues 905-925 (PVLYGVFLYMGVSSLQGIQFF). Residues 926–962 (DRLKLFGMPAKHQPDFIYLRHVPLRKVHLFTLIQLTC) are Extracellular-facing. The chain crosses the membrane as a helical span at residues 963-983 (LVLLWVIKASPAAIVFPMMVL). Residues 984-1093 (ALVFVRKVMD…GNAKEKSLFN (110 aa)) are Cytoplasmic-facing. Positions 1010–1036 (ESKKKKLDDAKKKAKEEEEAEKMLEIG) form a coiled coil.

This sequence belongs to the anion exchanger (TC 2.A.31) family. Homodimer. As to expression, expressed in the pyramidal cells of the hippocampus (at protein level). Highly expressed in all major regions of the brain, spinal column and in testis, and moderate levels in trachea, thyroid and medulla region of kidney. Low expression levels observed in pancreas and kidney cortex. In terms of tissue distribution, expressed in the brain. Expressed in the brain, heart and kidney.

The protein localises to the apical cell membrane. Its subcellular location is the basolateral cell membrane. The protein resides in the cytoplasmic vesicle. It localises to the secretory vesicle. It is found in the synaptic vesicle membrane. The protein localises to the cell membrane. It carries out the reaction 2 hydrogencarbonate(out) + chloride(in) + Na(+)(out) = 2 hydrogencarbonate(in) + chloride(out) + Na(+)(in). Activity is inhibited by 4,4'-Di-isothiocyanatostilbene-2,2'-disulfonic acid (DIDS - an inhibitor of several anion channels and transporters). With respect to regulation, activity is inhibited by 4,4'-Di-isothiocyanatostilbene-2,2'-disulfonic acid (DIDS - an inhibitor of several anion channels and transporters). Zinc-binding negatively regulates its activity. Functionally, mediates electroneutral sodium- and carbonate-dependent chloride-HCO3(-) exchange with a Na(+):HCO3(-) stoichiometry of 2:1. Plays a major role in pH regulation in neurons. Mediates sodium reabsorption in the renal cortical collecting ducts. This chain is Electroneutral sodium bicarbonate exchanger 1, found in Homo sapiens (Human).